The primary structure comprises 322 residues: Breast cancer metastasis-suppressor 1-like protein (322 aa).

Positions 1 to 16 are enriched in basic and acidic residues; the sequence is MPVHSREKKESNHNDM. A disordered region spans residues 1 to 56; the sequence is MPVHSREKKESNHNDMEVDYPENEGTSSEEDDSDSSSGSEEGDSSEMDDEDCERRR. The span at 17–51 shows a compositional bias: acidic residues; sequence EVDYPENEGTSSEEDDSDSSSGSEEGDSSEMDDED. Coiled coils occupy residues 50–82 and 147–178; these read EDCERRRMECLDEMSNLEKQFTDLKDQLYKERL and EKLLLYDTVQSELEEKIRRLEEDRHSIDITSE.

The protein belongs to the BRMS1 family.

It localises to the nucleus. Involved in the histone deacetylase (HDAC1)-dependent transcriptional repression activity. This Xenopus tropicalis (Western clawed frog) protein is Breast cancer metastasis-suppressor 1-like protein (brms1l).